A 360-amino-acid chain; its full sequence is Peptide chain release factor 1 (360 aa).

N5-methylglutamine is present on glutamine 236.

Belongs to the prokaryotic/mitochondrial release factor family. In terms of processing, methylated by PrmC. Methylation increases the termination efficiency of RF1.

The protein resides in the cytoplasm. Peptide chain release factor 1 directs the termination of translation in response to the peptide chain termination codons UAG and UAA. This is Peptide chain release factor 1 from Methylococcus capsulatus (strain ATCC 33009 / NCIMB 11132 / Bath).